The primary structure comprises 595 residues: MASTFSATTSSCNLSSSAAISSFPLAAGKRNANKVVLPRKNRNVKVSAMAKELHFNKDGSAIKKLQNGVNKLADLVGVTLGPKGRNVVLESKYGSPKIVNDGVTVAKEVELEDPVENIGAKLVRQAAAKTNDLAGDGTTTSVVLAQGLIAEGVKVVAAGANPVLITRGIEKTSKALVAELKKMSKEVEDSELADVAAVSAGNNHEVGNMIAEALSKVGRKGVVTLEEGKSAENSLYVVEGMQFDRGYISPYFVTDSEKMTVEFENCKLLLVDKKITNARDLINILEDAIRSGFPIVIIAEDIEQEALATLVVNKLRGSLKIAALKAPGFGERKSQYLDDIAILTGGTVIREEVGLTLDKADKEVLGNAAKVVLTKDTTTIVGDGSTQEAVNKRVSQIKNQIEAAEQEYEKEKLSERIAKLSGGVAVIQVGAQTETELKEKKLRVEDALNATKAAVEEGIVVGGGCTLLRLASKVDAIKDTLANDEEKVGADIVKRALSYPLKLIAKNAGVNGSVVSEKVLSSDNPKYGYNAATGKYEDLMAAGIIDPTKVVRCCLEHASSVAKTFLMSDCVVVEIKEPESAPVGNPMDNSGYGNI.

The transit peptide at 1-49 directs the protein to the chloroplast; the sequence is MASTFSATTSSCNLSSSAAISSFPLAAGKRNANKVVLPRKNRNVKVSAM.

This sequence belongs to the chaperonin (HSP60) family. In terms of assembly, oligomer of probably six alpha and six beta subunits.

Its subcellular location is the plastid. The protein resides in the chloroplast. In terms of biological role, this protein binds RuBisCO small and large subunits and is implicated in the assembly of the enzyme oligomer. In Pisum sativum (Garden pea), this protein is RuBisCO large subunit-binding protein subunit beta, chloroplastic.